The chain runs to 60 residues: Large ribosomal subunit protein uL30 (60 aa).

Belongs to the universal ribosomal protein uL30 family. In terms of assembly, part of the 50S ribosomal subunit.

The chain is Large ribosomal subunit protein uL30 from Desulfotalea psychrophila (strain LSv54 / DSM 12343).